The chain runs to 133 residues: Small ribosomal subunit protein uS8 (133 aa).

Belongs to the universal ribosomal protein uS8 family. In terms of assembly, part of the 30S ribosomal subunit.

Its function is as follows. One of the primary rRNA binding proteins, it binds directly to 16S rRNA central domain where it helps coordinate assembly of the platform of the 30S subunit. In Saccharolobus solfataricus (strain ATCC 35092 / DSM 1617 / JCM 11322 / P2) (Sulfolobus solfataricus), this protein is Small ribosomal subunit protein uS8.